Reading from the N-terminus, the 1129-residue chain is A-kinase anchor protein 11 (1129 aa).

Positions 1 to 12 are enriched in basic residues; that stretch reads MQKMQCHLRRPL. The segment at 1-21 is disordered; sequence MQKMQCHLRRPLHSSSSFSSQ. 2 positions are modified to phosphothreonine: Thr-251 and Thr-363. Disordered regions lie at residues 354–376, 394–416, and 434–455; these read IRDR…QTSS, EFAP…SENE, and SEEV…SEHS. Positions 404–416 are enriched in polar residues; it reads PHNSSVGSLSENE. A phosphoserine mark is found at Ser-434, Ser-439, and Ser-440. Over residues 442-455 the composition is skewed to basic and acidic residues; sequence GEEHPEMDVKSEHS. The residue at position 595 (Ser-595) is a Phosphoserine. At Thr-742 the chain carries Phosphothreonine. Ser-835 carries the post-translational modification Phosphoserine. Residues 905 to 918 are PKA-RII binding region; the sequence is LAEKIVAEAIEKAE. The tract at residues 962-1061 is disordered; that stretch reads SKEVEDFQST…QEDGAEGLQP (100 aa). Positions 968–995 are enriched in polar residues; that stretch reads FQSTESLGSQQMNLSVGEDSTGSWSNLS. Residues 1002 to 1011 are compositionally biased toward basic and acidic residues; sequence DESSSFHHLS. A compositionally biased stretch (low complexity) spans 1012–1028; that stretch reads ESSNGNSSSWSSLGLEG. Positions 1033 to 1042 are enriched in polar residues; sequence NNLSFPTSDS. Residues 1043–1056 are compositionally biased toward acidic residues; that stretch reads DGPDDRESEQEDGA.

In terms of tissue distribution, expressed in brain and testis.

It localises to the peroxisome. Functionally, binds to type II regulatory subunits of protein kinase A and anchors/targets them. The protein is A-kinase anchor protein 11 (Akap11) of Rattus norvegicus (Rat).